The primary structure comprises 369 residues: Caffeine synthase 1 (369 aa).

Residue tyrosine 24 coordinates S-adenosyl-L-homocysteine. Threonine 31 serves as a coordination point for caffeine. Positions 66, 71, 103, 104, 138, and 139 each coordinate S-adenosyl-L-homocysteine. Positions 156, 159, and 160 each coordinate caffeine. Residue asparagine 177 coordinates Mg(2+). Arginine 225 contacts caffeine. Residues aspartate 263, phenylalanine 265, and asparagine 266 each coordinate Mg(2+). Phenylalanine 321 lines the caffeine pocket.

The protein belongs to the methyltransferase superfamily. Type-7 methyltransferase family. Requires Mg(2+) as cofactor.

It carries out the reaction theobromine + S-adenosyl-L-methionine = caffeine + S-adenosyl-L-homocysteine + H(+). The enzyme catalyses 7-methylxanthine + S-adenosyl-L-methionine = theobromine + S-adenosyl-L-homocysteine + H(+). It functions in the pathway alkaloid biosynthesis. Its function is as follows. Involved in the biosynthesis of caffeine. Catalyzes the conversion of 7-methylxanthine (7mX) to theobromine and of theobromine to caffeine. This Camellia crassicolumna (Evergreen tea) protein is Caffeine synthase 1.